Here is a 1087-residue protein sequence, read N- to C-terminus: DYRK-family kinase pom1 (1087 aa).

Disordered regions lie at residues 57–81 (CPNRQSSSSTAADTSPSTNASNTNI), 120–182 (LLRS…SKSF), 238–308 (MAPK…LSTI), and 336–578 (NHSH…PSLS). The span at 62–81 (SSSSTAADTSPSTNASNTNI) shows a compositional bias: low complexity. Composition is skewed to polar residues over residues 132–165 (KNSPRNSIHRLSNISIGNNPIDFESSQQNNPSSL) and 246–256 (WRHTNFHSTSH). A compositionally biased stretch (low complexity) spans 292 to 307 (SGSLTKSSSESKNLST). Residues 336 to 361 (NHSHVGSQTKSHSFATPSVFDNNKPV) show a composition bias toward polar residues. Positions 362 to 373 (SSDNHNNTTTSS) are enriched in low complexity. Over residues 397 to 407 (VDGHRNHEAKH) the composition is skewed to basic and acidic residues. Over residues 429–442 (RGGFFSRLSFSRSS) the composition is skewed to low complexity. Positions 478–488 (NGKKTPTRTKS) are enriched in basic residues. Position 513 is a phosphoserine (Ser513). Residues 527-536 (VSREPEKPEE) show a composition bias toward basic and acidic residues. A compositionally biased stretch (polar residues) spans 555-578 (QQRSVSYTPKRSSDTSESLQPSLS). The 297-residue stretch at 699–995 (YEVVDFLGKG…PQQAAQHDFL (297 aa)) folds into the Protein kinase domain. ATP contacts are provided by residues 705-713 (LGKGSFGQV) and Lys728. Asp825 functions as the Proton acceptor in the catalytic mechanism. 2 disordered regions span residues 992–1011 (HDFLTGKQDVRRPNTAPARQ) and 1017–1056 (PNIETAPIPRPLPNLPMEYNDHTLPSPKEPSNQASNLVRS). Over residues 1045–1055 (EPSNQASNLVR) the composition is skewed to polar residues.

It belongs to the protein kinase superfamily. CMGC Ser/Thr protein kinase family. MNB/DYRK subfamily. Interacts with rga4. Interacts with tea4; this interaction triggers pom1 plasma membrane association. Autophosphorylates at the cell cortex to lower lipid affinity and promote membrane release. Dephosphorylation by dis2, regulated by tea4, triggers membrane association.

The protein localises to the cell tip. The protein resides in the cell membrane. The enzyme catalyses L-seryl-[protein] + ATP = O-phospho-L-seryl-[protein] + ADP + H(+). The catalysed reaction is L-threonyl-[protein] + ATP = O-phospho-L-threonyl-[protein] + ADP + H(+). It catalyses the reaction L-tyrosyl-[protein] + ATP = O-phospho-L-tyrosyl-[protein] + ADP + H(+). Functionally, polarity factor involved in localization of polarized growth and cytokinesis. Forms an intracellular gradient that serves to measure cell length and control mitotic entry. Controls the timing of mitotic commitment by regulating the inhibitory impact of cdr1/cdr2 on wee1 activity. Directly phosphorylates the tail of cdr2 which inhibits cdr2 activation by ssp1. Cdr2 phosphorylation by pom1 also modulates cdr2 association with membranes and inhibits cdr2 interaction with mid1, reducing its clustering ability, possibly via the down-regulation of cdr2 kinase activity. Acts as a negative regulator of mid1 distribution, excluding mid1 from non-growing ends, which prevents division-septum assembly at the cell ends. The pom1 polar gradient also mediates mitotic entry by regulating cdk1. Plays an essential role in proper localization and phosphorylation of a GAP for cdc42, rga4, which ensures bipolar localization of GTP-bound, active cdc42 involved in F-actin formation. Phosphorylates multiple other substrates that function in polarized cell growth, including tea4, mod5, pal1, the Rho GAP rga7, and the Arf GEF syt22. This chain is DYRK-family kinase pom1, found in Schizosaccharomyces pombe (strain 972 / ATCC 24843) (Fission yeast).